Consider the following 460-residue polypeptide: MTQPVTPTIFTVSRLNQTVRQLLELEMGQIWLSAEISNLSQPASGHWYFTLKDDKAQVRCAMFRNSNRRVTFRPQNGQQVLVRASITLYESRGDYQLIAESMQPAGDGLLQQQFEALKQRLQAEGLFDVGHKQPLPSPARCVGVITSTSGAALHDVLHVLRRRDPALPVVIYPSAVQGGEAPGQLVRAIALANLRAECDVLIVGRGGGSLEDLWSFNDERVARAIFASHIPIVSAVGHETDVSIADFVADLRAPTPSAAAEVVSRNRDELLRRLLSQRQRLDMALDYTLARRRQRLQQLRHRLEQQHPQLRLARQQARLLSLHRRLEEAIDTQLRLAERRWRLGGERLQQRSPAHALRQQQYHLQQLSHRLESQLQRSVAARRERFGALCSRLEGMSPLATLARGFSVTQRDDGQLLRHREQVAPGDTLRTRLEDGWVESQVTATRPLTARRPRGTKGSA.

Belongs to the XseA family. In terms of assembly, heterooligomer composed of large and small subunits.

It localises to the cytoplasm. It carries out the reaction Exonucleolytic cleavage in either 5'- to 3'- or 3'- to 5'-direction to yield nucleoside 5'-phosphates.. Functionally, bidirectionally degrades single-stranded DNA into large acid-insoluble oligonucleotides, which are then degraded further into small acid-soluble oligonucleotides. The sequence is that of Exodeoxyribonuclease 7 large subunit from Edwardsiella ictaluri (strain 93-146).